The following is a 115-amino-acid chain: WLMIVEKECRVIVMLAKCYEAGKKKCQKYWPDSKDTLTFGQIKVFNAEEVRYSGFLVRKFQIESVEKMITMEVFQYQYTNWPDHSVPYTTSNLVRMHKNVIQLLAEIGGDAPMVV.

Residues 1 to 115 (WLMIVEKECR…EIGGDAPMVV (115 aa)) form the Tyrosine-protein phosphatase domain. Residue Asp-83 coordinates substrate.

This sequence belongs to the protein-tyrosine phosphatase family.

It catalyses the reaction O-phospho-L-tyrosyl-[protein] + H2O = L-tyrosyl-[protein] + phosphate. This is Tyrosine-protein phosphatase 21 (STY-21) from Styela plicata (Wrinkled sea squirt).